The chain runs to 242 residues: Probable 2-phosphosulfolactate phosphatase (242 aa).

This sequence belongs to the ComB family. The cofactor is Mg(2+).

The enzyme catalyses (2R)-O-phospho-3-sulfolactate + H2O = (2R)-3-sulfolactate + phosphate. This Prochlorococcus marinus (strain NATL1A) protein is Probable 2-phosphosulfolactate phosphatase.